Consider the following 469-residue polypeptide: Pancreatic lipase-related protein 2 (469 aa).

The signal sequence occupies residues Met-1–Gly-17. Cysteines 21 and 27 form a disulfide. The interval Ile-93–Pro-105 is required for galactolipase activity. A disulfide bridge links Cys-109 with Cys-120. Ser-171 (nucleophile) is an active-site residue. The Charge relay system role is filled by Asp-195. Residues Glu-206, Arg-209, Asp-211, and Asp-214 each coordinate Ca(2+). Cys-256 and Cys-280 are joined by a disulfide. The interval Lys-257–Ser-279 is required for galactolipase activity. Catalysis depends on His-282, which acts as the Charge relay system. 2 cysteine pairs are disulfide-bonded: Cys-304–Cys-315 and Cys-318–Cys-323. N-linked (GlcNAc...) asparagine glycans are attached at residues Asn-353 and Asn-428. The region spanning Trp-357–Cys-469 is the PLAT domain. An intrachain disulfide couples Cys-453 to Cys-469.

This sequence belongs to the AB hydrolase superfamily. Lipase family. In terms of tissue distribution, pancreas.

It localises to the secreted. The protein resides in the zymogen granule membrane. The protein localises to the cell projection. Its subcellular location is the neuron projection. It carries out the reaction a triacylglycerol + H2O = a diacylglycerol + a fatty acid + H(+). The enzyme catalyses a 1,2-diacyl-3-O-(beta-D-galactosyl)-sn-glycerol + 2 H2O = 3-beta-D-galactosyl-sn-glycerol + 2 a fatty acid + 2 H(+). It catalyses the reaction 1,2,3-tri-(9Z-octadecenoyl)-glycerol + H2O = di-(9Z)-octadecenoylglycerol + (9Z)-octadecenoate + H(+). The catalysed reaction is di-(9Z)-octadecenoylglycerol + H2O = (9Z-octadecenoyl)-glycerol + (9Z)-octadecenoate + H(+). It carries out the reaction (9Z-octadecenoyl)-glycerol + H2O = glycerol + (9Z)-octadecenoate + H(+). The enzyme catalyses 1-(9Z-octadecenoyl)-glycerol + H2O = glycerol + (9Z)-octadecenoate + H(+). It catalyses the reaction 1,2,3-tripropanoylglycerol + H2O = dipropanoylglycerol + propanoate + H(+). The catalysed reaction is 1,2,3-tributanoylglycerol + H2O = dibutanoylglycerol + butanoate + H(+). It carries out the reaction 1,2,3-trioctanoylglycerol + H2O = dioctanoylglycerol + octanoate + H(+). The enzyme catalyses 1,2-didecanoylglycerol + H2O = decanoylglycerol + decanoate + H(+). It catalyses the reaction long chain 1,2-diacyl-3-O-beta-D-galactosyl-sn-glycerol + H2O = long chain acyl-3-O-beta-D-galactosyl-sn-glycerol + a fatty acid + H(+). The catalysed reaction is 1,2-dioctanoyl-3-O-beta-D-galactosyl-sn-glycerol + H2O = octanoyl-3-(beta-D-galactosyl)-sn-glycerol + octanoate + H(+). It carries out the reaction 1,2-didodecanoyl-3-beta-D-galactosyl-sn-glycerol + H2O = dodecanoyl-3-beta-D-galactosyl-sn-glycerol + dodecanoate + H(+). The enzyme catalyses 1-beta-D-galactosyl-2,3-didodecanoyl-sn-glycerol + H2O = 1-beta-D-galactosyl-dodecanoyl-sn-glycerol + dodecanoate + H(+). It catalyses the reaction a 1,2-diacyl-3-O-[alpha-D-galactosyl-(1-&gt;6)-beta-D-galactosyl]-sn-glycerol + H2O = acyl-3-O-[alpha-D-galactosyl-(1-&gt;6)-beta-D-galactosyl]-sn-glycerol + a fatty acid + H(+). The catalysed reaction is long chain 1,2-diacyl-3-O-[alpha-D-galactosyl-(1-&gt;6)-beta-D-galactosyl]-sn-glycerol + H2O = long chain acyl-3-O-[alpha-D-galactosyl-(1-&gt;6)-beta-D-galactosyl]-sn-glycerol + a fatty acid + H(+). It carries out the reaction 1,2-dioctanoyl-3-O-[alpha-D-galactosyl-(1-&gt;6)-beta-D-galactosyl]-sn-glycerol + H2O = octanoyl-3-O-[alpha-D-galactosyl-(1-&gt;6)-beta-D-galactosyl]-sn-glycerol + octanoate + H(+). The enzyme catalyses 1,2-didodecanoyl-3-O-[alpha-D-galactosyl-(1-&gt;6)-beta-D-galactosyl]-sn-glycerol + H2O = dodecanoyl-3-O-[alpha-D-galactosyl-(1-&gt;6)-beta-D-galactosyl]-sn-glycerol + dodecanoate + H(+). It catalyses the reaction a 1,2-diacyl-sn-glycero-3-phosphocholine + H2O = a monoacyl-sn-glycero-3-phosphocholine + a fatty acid + H(+). Its pathway is glycerolipid metabolism; triacylglycerol degradation. It functions in the pathway glycolipid metabolism. Its activity is regulated as follows. Regulated by CLPS and bile salts levels ranging 1-5 mM in neonates and 2-30 mM in healthy adults. CLPS stimulates milk fat digestion in the presence of 4 mM bile salts. Triacylglycerol lipase activity toward short- and medium-chain triglycerides is inhibited by increasing concentrations of bile salts and weakly reactivated by CLPS. Optimal triacylglycerol lipase activity is reached at bile salts concentrations ranging from 0.1 to 0.5 mM and then decreases at concentrations higher than 1 mM. Lipase activity toward long-chain glycerolipids is stimulated by CLPS in the presence of 4 mM bile salts. Galactolipase activity is inhibited at high concentrations of bile salts. Triacylglycerol lipase activity is inhibited by anti-obesity drug tetrahydrolipstatin. In terms of biological role, lipase that primarily hydrolyzes triglycerides and galactosylglycerides. In neonates, may play a major role in pancreatic digestion of dietary fats such as milk fat globules enriched in long-chain triglycerides. Hydrolyzes short-, medium- and long-chain fatty acyls in triglycerides without apparent positional specificity. Can completely deacylate triacylglycerols. When the liver matures and bile salt synthesis increases, likely functions mainly as a galactolipase and monoacylglycerol lipase. Hydrolyzes monogalactosyldiglycerols (MGDG) and digalactosyldiacylglycerols (DGDG) present in a plant-based diet, releasing long-chain polyunsaturated fatty acids. Hydrolyzes medium- and long-chain fatty acyls in galactolipids. May act together with LIPF to hydrolyze partially digested triglycerides. Hydrolyzes long-chain monoglycerides with high efficiency. In cytotoxic T cells, contributes to perforin-dependent cell lysis, but is unlikely to mediate direct cytotoxicity. Also has low phospholipase activity. In neurons, required for the localization of the phospholipid 1-oleoyl-2-palmitoyl-PC (OPPC) to neurite tips through acyl chain remodeling of membrane phospholipids. The resulting OPPC-rich lipid membrane domain recruits the t-SNARE protein STX4 by selectively interacting with the STX4 transmembrane domain and this promotes surface expression of the dopamine transporter SLC6A3/DAT at neurite tips by facilitating fusion of SLC6A3-containing transport vesicles with the plasma membrane. This chain is Pancreatic lipase-related protein 2, found in Homo sapiens (Human).